We begin with the raw amino-acid sequence, 84 residues long: ATP synthase subunit c (84 aa).

2 consecutive transmembrane segments (helical) span residues 9–29 (LGLAIFGCAIGMALAALGCGI) and 57–77 (ILGLAFIESLAIYALVINLII).

Belongs to the ATPase C chain family. As to quaternary structure, F-type ATPases have 2 components, F(1) - the catalytic core - and F(0) - the membrane proton channel. F(1) has five subunits: alpha(3), beta(3), gamma(1), delta(1), epsilon(1). F(0) has three main subunits: a(1), b(2) and c(10-14). The alpha and beta chains form an alternating ring which encloses part of the gamma chain. F(1) is attached to F(0) by a central stalk formed by the gamma and epsilon chains, while a peripheral stalk is formed by the delta and b chains.

It localises to the cell membrane. In terms of biological role, f(1)F(0) ATP synthase produces ATP from ADP in the presence of a proton or sodium gradient. F-type ATPases consist of two structural domains, F(1) containing the extramembraneous catalytic core and F(0) containing the membrane proton channel, linked together by a central stalk and a peripheral stalk. During catalysis, ATP synthesis in the catalytic domain of F(1) is coupled via a rotary mechanism of the central stalk subunits to proton translocation. Key component of the F(0) channel; it plays a direct role in translocation across the membrane. A homomeric c-ring of between 10-14 subunits forms the central stalk rotor element with the F(1) delta and epsilon subunits. This is ATP synthase subunit c from Lawsonia intracellularis (strain PHE/MN1-00).